The chain runs to 177 residues: tRNA-splicing endonuclease (177 aa).

Catalysis depends on residues tyrosine 114, histidine 123, and lysine 154.

It belongs to the tRNA-intron endonuclease family. Archaeal short subfamily. As to quaternary structure, homotetramer; although the tetramer contains four active sites, only two participate in the cleavage. Therefore, it should be considered as a dimer of dimers.

It carries out the reaction pretRNA = a 3'-half-tRNA molecule with a 5'-OH end + a 5'-half-tRNA molecule with a 2',3'-cyclic phosphate end + an intron with a 2',3'-cyclic phosphate and a 5'-hydroxyl terminus.. Its function is as follows. Endonuclease that removes tRNA introns. Cleaves pre-tRNA at the 5'- and 3'-splice sites to release the intron. The products are an intron and two tRNA half-molecules bearing 2',3' cyclic phosphate and 5'-OH termini. Recognizes a pseudosymmetric substrate in which 2 bulged loops of 3 bases are separated by a stem of 4 bp. The chain is tRNA-splicing endonuclease from Methanococcus maripaludis (strain DSM 14266 / JCM 13030 / NBRC 101832 / S2 / LL).